Consider the following 467-residue polypeptide: Retinoic acid receptor RXR-gamma (467 aa).

Residues 1–142 are modulating; it reads MYGNYPHFIK…TSPGSLAKHI (142 aa). 2 NR C4-type zinc fingers span residues 143–163 and 179–203; these read CAICGDRSSGKHYGVYSCEGC and CRDNKDCLIDKRQRNRCQYCRYQKC. Positions 143–208 form a DNA-binding region, nuclear receptor; that stretch reads CAICGDRSSG…RYQKCLAMGM (66 aa). The interval 209-232 is hinge; the sequence is KREAVQEERQGSRERSENEAESTS. Residues 214 to 226 are compositionally biased toward basic and acidic residues; the sequence is QEERQGSRERSEN. The tract at residues 214-237 is disordered; it reads QEERQGSRERSENEAESTSGGSED. The NR LBD domain maps to 235–463; sequence SEDMPVERIL…TFLMEMLETP (229 aa).

Belongs to the nuclear hormone receptor family. NR2 subfamily. Homodimer. Heterodimer; with a RAR molecule. Binds DNA preferentially as a RAR/RXR heterodimer. Isoform 1 is highly expressed inliver. Isoform 2 is abundantly expressed in eye and dorsal root ganglia.

The protein localises to the nucleus. Its function is as follows. Receptor for retinoic acid. Retinoic acid receptors bind as heterodimers to their target response elements in response to their ligands, all-trans or 9-cis retinoic acid, and regulate gene expression in various biological processes. The RAR/RXR heterodimers bind to the retinoic acid response elements (RARE) composed of tandem 5'-AGGTCA-3' sites known as DR1-DR5. The high affinity ligand for RXRs is 9-cis retinoic acid. The polypeptide is Retinoic acid receptor RXR-gamma (RXRG) (Gallus gallus (Chicken)).